We begin with the raw amino-acid sequence, 163 residues long: Small ribosomal subunit protein bS18c (163 aa).

Disordered stretches follow at residues 1–52 and 144–163; these read MYIS…IGPG and NLRNSNQNLRNNNRNLSSDC. Residues 7-48 show a composition bias toward basic residues; that stretch reads PFRKSKQPFRKSKQPFHKSKQPFRKFKQPFRKSKQPFRRRSR.

The protein belongs to the bacterial ribosomal protein bS18 family. Part of the 30S ribosomal subunit.

Its subcellular location is the plastid. The protein localises to the chloroplast. This Saccharum hybrid (Sugarcane) protein is Small ribosomal subunit protein bS18c.